A 355-amino-acid polypeptide reads, in one-letter code: 3-dehydroquinate synthase (355 aa).

NAD(+) is bound by residues 71–76 (EGEASK), 105–109 (GVVGD), 129–130 (TS), Lys142, and Lys151. Zn(2+) is bound by residues Glu184, His246, and His263.

Belongs to the sugar phosphate cyclases superfamily. Dehydroquinate synthase family. Co(2+) serves as cofactor. Requires Zn(2+) as cofactor. It depends on NAD(+) as a cofactor.

It is found in the cytoplasm. It carries out the reaction 7-phospho-2-dehydro-3-deoxy-D-arabino-heptonate = 3-dehydroquinate + phosphate. It functions in the pathway metabolic intermediate biosynthesis; chorismate biosynthesis; chorismate from D-erythrose 4-phosphate and phosphoenolpyruvate: step 2/7. Functionally, catalyzes the conversion of 3-deoxy-D-arabino-heptulosonate 7-phosphate (DAHP) to dehydroquinate (DHQ). The chain is 3-dehydroquinate synthase from Streptococcus sanguinis (strain SK36).